Reading from the N-terminus, the 181-residue chain is MMQPLYLVGPRGCGKTTIGMALAQATGFRFADTDRWLQSHVQMSVADIVEKEGWGGFRARETAALEAVSAPSTVVATGGGIILTEYNRRYMHRVGVVIYLCAPVSTLVNRLEAEPEAELRPTLTGKPLSEEVREVLEQRDALYRETAHYIIDATKTPAQVVSEIIAALPPSTQRLQGDVYT.

12 to 17 (GCGKTT) lines the ATP pocket. Residues threonine 16 and aspartate 32 each contribute to the Mg(2+) site. Residues aspartate 34, arginine 58, and glycine 79 each coordinate substrate. The interval 112–126 (EAEPEAELRPTLTGK) is LID domain. Arginine 120 is a binding site for ATP. Arginine 139 is a binding site for substrate.

It belongs to the shikimate kinase family. AroL subfamily. As to quaternary structure, monomer. It depends on Mg(2+) as a cofactor.

It is found in the cytoplasm. The catalysed reaction is shikimate + ATP = 3-phosphoshikimate + ADP + H(+). It participates in metabolic intermediate biosynthesis; chorismate biosynthesis; chorismate from D-erythrose 4-phosphate and phosphoenolpyruvate: step 5/7. In terms of biological role, catalyzes the specific phosphorylation of the 3-hydroxyl group of shikimic acid using ATP as a cosubstrate. The chain is Shikimate kinase 2 from Salmonella schwarzengrund (strain CVM19633).